Here is a 369-residue protein sequence, read N- to C-terminus: Superinfection exclusion protein (369 aa).

An N-terminal signal peptide occupies residues 1–15; it reads MIALLILSLTCSVST.

The protein belongs to the serpin family. Orthopoxvirus OPG040 subfamily. As to quaternary structure, interacts with A56 protein.

It is found in the virion membrane. The protein resides in the host cell membrane. Functionally, prevents cell to cell fusion via its interaction with A56 protein. The A56-K2 complex associates with components of the entry fusion complex (EFC) presumably to avoid superinfection and syncytium formation. This is Superinfection exclusion protein (OPG040) from Vaccinia virus (strain Copenhagen) (VACV).